The primary structure comprises 432 residues: Cyclic 2,3-diphosphoglycerate synthetase (432 aa).

Belongs to the cyclic 2,3-diphosphoglycerate synthetase family.

The protein resides in the cytoplasm. The enzyme catalyses (2R)-2,3-bisphosphoglycerate + ATP + H(+) = cyclic (2R)-2,3-bisphosphoglycerate + ADP + phosphate. Functionally, catalyzes the formation of cyclic 2,3-diphosphoglycerate (cDPG) by formation of an intramolecular phosphoanhydride bond at the expense of ATP. In Thermococcus onnurineus (strain NA1), this protein is Cyclic 2,3-diphosphoglycerate synthetase.